The primary structure comprises 311 residues: D-allose-binding periplasmic protein (311 aa).

The signal sequence occupies residues 1-23 (MNKYLKYFSGTLVGLMLSTSAFA).

This sequence belongs to the bacterial solute-binding protein 2 family.

The protein resides in the periplasm. In terms of biological role, part of the binding-protein-dependent transport system AlsBAC for D-allose. This chain is D-allose-binding periplasmic protein (alsB), found in Escherichia coli (strain K12).